We begin with the raw amino-acid sequence, 244 residues long: Na(+)-translocating NADH-quinone reductase subunit E (244 aa).

6 helical membrane-spanning segments follow: residues 11–31 (LLGI…TFLG), 47–67 (GLGM…WLIH), 90–110 (FLEL…LELL), 123–143 (GIFL…LFGI), 153–173 (VVFS…FATI), and 189–209 (MGIS…LTGI).

Belongs to the NqrDE/RnfAE family. As to quaternary structure, composed of six subunits; NqrA, NqrB, NqrC, NqrD, NqrE and NqrF.

It is found in the cell inner membrane. The enzyme catalyses a ubiquinone + n Na(+)(in) + NADH + H(+) = a ubiquinol + n Na(+)(out) + NAD(+). Its function is as follows. NQR complex catalyzes the reduction of ubiquinone-1 to ubiquinol by two successive reactions, coupled with the transport of Na(+) ions from the cytoplasm to the periplasm. NqrA to NqrE are probably involved in the second step, the conversion of ubisemiquinone to ubiquinol. In Chlamydia muridarum (strain MoPn / Nigg), this protein is Na(+)-translocating NADH-quinone reductase subunit E.